We begin with the raw amino-acid sequence, 108 residues long: Thiosulfate sulfurtransferase GlpE (108 aa).

In terms of domain architecture, Rhodanese spans 18–106 (ENEGATLADI…WERSGLPIET (89 aa)). Cys-66 functions as the Cysteine persulfide intermediate in the catalytic mechanism.

The protein belongs to the GlpE family.

It localises to the cytoplasm. It carries out the reaction thiosulfate + hydrogen cyanide = thiocyanate + sulfite + 2 H(+). The enzyme catalyses thiosulfate + [thioredoxin]-dithiol = [thioredoxin]-disulfide + hydrogen sulfide + sulfite + 2 H(+). Its function is as follows. Transferase that catalyzes the transfer of sulfur from thiosulfate to thiophilic acceptors such as cyanide or dithiols. May function in a CysM-independent thiosulfate assimilation pathway by catalyzing the conversion of thiosulfate to sulfite, which can then be used for L-cysteine biosynthesis. This chain is Thiosulfate sulfurtransferase GlpE, found in Actinobacillus pleuropneumoniae serotype 3 (strain JL03).